A 206-amino-acid chain; its full sequence is LexA repressor (206 aa).

A DNA-binding region (H-T-H motif) is located at residues 28–48 (RAEIATRLGFKSANAAEEHLK). Catalysis depends on for autocatalytic cleavage activity residues Ser123 and Lys160.

It belongs to the peptidase S24 family. In terms of assembly, homodimer.

The enzyme catalyses Hydrolysis of Ala-|-Gly bond in repressor LexA.. Its function is as follows. Represses a number of genes involved in the response to DNA damage (SOS response), including recA and lexA. In the presence of single-stranded DNA, RecA interacts with LexA causing an autocatalytic cleavage which disrupts the DNA-binding part of LexA, leading to derepression of the SOS regulon and eventually DNA repair. In Shewanella sp. (strain ANA-3), this protein is LexA repressor.